The sequence spans 375 residues: Elongation factor Tu (375 aa).

A tr-type G domain is found at 10 to 205 (KPHINVGAIG…TMDKYFVIPE (196 aa)). The G1 stretch occupies residues 19 to 26 (GHVDHGKT). 19-26 (GHVDHGKT) lines the GTP pocket. Thr26 contributes to the Mg(2+) binding site. A G2 region spans residues 60-64 (GITIN). The interval 81 to 84 (DCPG) is G3. GTP contacts are provided by residues 81-85 (DCPGH) and 136-139 (NKMD). Residues 136–139 (NKMD) form a G4 region. Positions 173 to 175 (SAF) are G5.

The protein belongs to the TRAFAC class translation factor GTPase superfamily. Classic translation factor GTPase family. EF-Tu/EF-1A subfamily. As to quaternary structure, monomer.

It is found in the cytoplasm. It catalyses the reaction GTP + H2O = GDP + phosphate + H(+). Functionally, GTP hydrolase that promotes the GTP-dependent binding of aminoacyl-tRNA to the A-site of ribosomes during protein biosynthesis. The protein is Elongation factor Tu (tuf) of Spirochaeta aurantia.